A 1151-amino-acid chain; its full sequence is MRFTRLRLNGFKSFVDPTDLVIHEGLTGVVGPNGCGKSNLLEALRWVMGENRPTAMRGAGMEDVIFAGAATRPARNFAEVALVLDNADRLAPAGFNDADTIEIVRRITRDAGSAYKANTKDVRARDIQMLFADASTGAHSPALVRQGQISELINAKPKARRRILEEAAGISGLYQRRHEAELRLAATEQNLARVEDVLDQLAQQLSTLARQAKQAARYREIGEELRRAEGSLLYRRWREADLARTEALAILRERMTAAGQAEAAARKAAGARAEAEATLPPKREEEAIAGAVLQRLTVERDTLAAEEDRARATIATLVSRVDQLGRDIEREAGLNRDAAETIGRLEWEREALETAHEGHEERLAEAAEAAREAGAALGEREEILSERTEDAARLSARHQSAQRMLVDSRTTLARSEAEAARARETVEAAAEAQERAAETWEEAAAAQEEAQERAEAAEEALVQADEARAEAQSREAEARAQRSAAEGEANALRAEVAALARLVDREAQAGSQLLDRIQVEPGFEAALGAALSDDLRAPEVAADAPSGWAALPDYDETAPLPAGAEPLAPHVGVPEVLRRRIGQIGLVGREAGAALQPLLQPGQRLVSIEGDLWRWDGFRAGAEDAPSAAALRLKQLNRLVALKRDLEEVAARAEGARQAHEALQARLAQLTRADQEAREARRAADARVTEASRAAARAEADRSISGGKLESARLAVKRYEDEAMEARARLREAEGVASALPDLEAARAGLEDLKMAVEAARIAMMSRRSLHDELRREGEARVKRRQEVTKDLSGWKHRLETAEKRSAELAERKAETEEALREAAEAPEEIAARREELAEAIEAAEERRARASDALASAEAALRAAQEAEREAERQAGESREARARAEARADAATEALQLAAERIREETERTPQQLLEALAVDPERIPTVEALETDVGRLKRQREALGAVNLRAEEDAQAVQTEHDTLKAEKTDLEEAVKKLRAGIQGLNREGRERLLTAFEQVNASFGTLFTHLFGGGEARLVMVESDDPLEAGLEIMCQPPGKKLSTLSLLSGGEQTLTALALIFAVFLANPAPICVLDEVDAPLDDANVTRFCDLLDEMTRRTETRFLIITHHAVTMARMDRLFGVTMAEQGVSQLVSVDLKRAEALVA.

Proline 32 to asparagine 39 lines the ATP pocket. Coiled-coil stretches lie at residues isoleucine 170–tyrosine 218, isoleucine 342–glutamate 379, aspartate 407–glutamine 508, and leucine 633–glutamate 994. Composition is skewed to basic and acidic residues over residues arginine 421–glutamate 438 and aspartate 465–alanine 480. Disordered regions lie at residues arginine 421–serine 483, serine 806–alanine 826, and leucine 862–arginine 889. The span at glutamine 866–arginine 889 shows a compositional bias: basic and acidic residues.

The protein belongs to the SMC family. In terms of assembly, homodimer.

Its subcellular location is the cytoplasm. In terms of biological role, required for chromosome condensation and partitioning. This chain is Chromosome partition protein Smc, found in Cereibacter sphaeroides (strain ATCC 17029 / ATH 2.4.9) (Rhodobacter sphaeroides).